Reading from the N-terminus, the 323-residue chain is Ferrochelatase (323 aa).

Residues His195 and Glu276 each coordinate Fe cation.

It belongs to the ferrochelatase family.

It localises to the cytoplasm. The catalysed reaction is heme b + 2 H(+) = protoporphyrin IX + Fe(2+). The protein operates within porphyrin-containing compound metabolism; protoheme biosynthesis; protoheme from protoporphyrin-IX: step 1/1. Its function is as follows. Catalyzes the ferrous insertion into protoporphyrin IX. This Mannheimia succiniciproducens (strain KCTC 0769BP / MBEL55E) protein is Ferrochelatase.